The sequence spans 469 residues: Pentatricopeptide repeat-containing protein At2g34370, mitochondrial (469 aa).

The transit peptide at 1-65 (MVRLVCSRIL…QNRSFVQCRR (65 aa)) directs the protein to the mitochondrion. PPR repeat units follow at residues 142 to 172 (DARS…MPKR), 173 to 207 (NSET…GNKP), 208 to 238 (DKEI…MYRD), and 244 to 274 (SMED…MTVE). The interval 375–469 (DIGFVPATRV…NGVCSCKDYW (95 aa)) is type DYW motif.

The protein belongs to the PPR family. PCMP-H subfamily.

The protein resides in the mitochondrion. The protein is Pentatricopeptide repeat-containing protein At2g34370, mitochondrial (PCMP-H25) of Arabidopsis thaliana (Mouse-ear cress).